The sequence spans 249 residues: DNA repair protein RecO (249 aa).

It belongs to the RecO family.

Functionally, involved in DNA repair and RecF pathway recombination. This chain is DNA repair protein RecO, found in Rhodopseudomonas palustris (strain HaA2).